The sequence spans 121 residues: Glycine cleavage system H protein (121 aa).

The region spanning 16-98 (VATVGITAYA…ESGGWFAKIK (83 aa)) is the Lipoyl-binding domain. Position 57 is an N6-lipoyllysine (Lys57).

This sequence belongs to the GcvH family. As to quaternary structure, the glycine cleavage system is composed of four proteins: P, T, L and H. The cofactor is (R)-lipoate.

Its function is as follows. The glycine cleavage system catalyzes the degradation of glycine. The H protein shuttles the methylamine group of glycine from the P protein to the T protein. This chain is Glycine cleavage system H protein, found in Caulobacter vibrioides (strain NA1000 / CB15N) (Caulobacter crescentus).